A 431-amino-acid chain; its full sequence is Adenosylhomocysteinase (431 aa).

Residues T56, D131, and E156 each coordinate substrate. Residue 157–159 (TTT) participates in NAD(+) binding. Substrate contacts are provided by K186 and D190. Residues N191, 222–227 (GDVGKG), E243, 299–301 (IGH), and N345 contribute to the NAD(+) site.

This sequence belongs to the adenosylhomocysteinase family. In terms of assembly, homotetramer. Requires NAD(+) as cofactor.

The catalysed reaction is S-adenosyl-L-homocysteine + H2O = L-homocysteine + adenosine. It functions in the pathway amino-acid biosynthesis; L-homocysteine biosynthesis; L-homocysteine from S-adenosyl-L-homocysteine: step 1/1. Adenosylhomocysteine is a competitive inhibitor of S-adenosyl-L-methionine-dependent methyl transferase reactions; therefore adenosylhomocysteinase may play a key role in the control of methylations via regulation of the intracellular concentration of adenosylhomocysteine. The polypeptide is Adenosylhomocysteinase (sahA) (Dictyostelium discoideum (Social amoeba)).